Reading from the N-terminus, the 484-residue chain is Regulator of G-protein signaling 9 (484 aa).

In terms of domain architecture, DEP spans 30–105; sequence PDTGVRVQNQ…PDSSLYRFQT (76 aa). In terms of domain architecture, G protein gamma spans 219–280; that stretch reads VVSVRKEIMY…ITDDTQFWDL (62 aa). One can recognise an RGS domain in the interval 299 to 414; it reads NFSELIRDPK…LKSPIYKEML (116 aa). The disordered stretch occupies residues 460–484; it reads TTVDITQVMSKLDRRSQLRKEPPPK. Basic and acidic residues predominate over residues 470-484; that stretch reads KLDRRSQLRKEPPPK.

Heterodimer with GNB5. Interacts with RGS7BP, leading to regulate the subcellular location of the heterodimer formed with GNB5. Component of the RGS9-1-Gbeta5 complex composed of RGS9 (RGS9-1), Gbeta5 (GNB5) and RGS9BP. Interacts with PDE6G and GNAT1. Phosphorylation is decreased by light exposition. Photoreceptor outer segments.

It localises to the membrane. Inhibits signal transduction by increasing the GTPase activity of G protein alpha subunits thereby driving them into their inactive GDP-bound form. Binds to GNAT1. Involved in phototransduction; key element in the recovery phase of visual transduction. In Bos taurus (Bovine), this protein is Regulator of G-protein signaling 9 (RGS9).